We begin with the raw amino-acid sequence, 211 residues long: Ribosomal RNA small subunit methyltransferase G (211 aa).

Residues G74, L79, 125-126 (AE), and R140 contribute to the S-adenosyl-L-methionine site.

The protein belongs to the methyltransferase superfamily. RNA methyltransferase RsmG family.

Its subcellular location is the cytoplasm. Functionally, specifically methylates the N7 position of guanine in position 518 of 16S rRNA. This is Ribosomal RNA small subunit methyltransferase G from Clavibacter sepedonicus (Clavibacter michiganensis subsp. sepedonicus).